A 330-amino-acid chain; its full sequence is MVLMVEGISKDYREFHLRDVTFSVEKGEHFIILGPSGAGKTVLLEVIAGIIEPDSGRIFLNGEDITDLPPEKRGLAYIPQNYALFPNMSVFDNIAFGLKVRKVPKAEIGRKVRELSEVLGISHLLKRKPKTLSGGEMQRVAIARALAVEPELLLLDEPFANLDVQTRGRLINEMKRWRKELGFTALHVTHSFEEAVSLGDRVGVMLNGRLVQVGPVREVFSRPASEEVAKFLGFENIVEGLAEGRILRANGLVIELPIEASGRIRVGIRPEDIVLSDEPLKSSMRNTFQAEVQADVEELGELGPRTRKAKGRWSGAFSIRYPLFGAGAGA.

One can recognise an ABC transporter domain in the interval 3 to 232; the sequence is LMVEGISKDY…PASEEVAKFL (230 aa). 34-41 is a binding site for ATP; sequence GPSGAGKT.

It belongs to the ABC transporter superfamily. Sulfate/tungstate importer (TC 3.A.1.6) family. The complex is composed of two ATP-binding proteins (WtpC), two transmembrane proteins (WtpB) and a solute-binding protein (WtpA).

Its subcellular location is the cell membrane. The catalysed reaction is tungstate(in) + ATP + H2O = tungstate(out) + ADP + phosphate + H(+). Part of the ABC transporter complex WtpABC involved in molybdate/tungstate import. Responsible for energy coupling to the transport system. This is Molybdate/tungstate import ATP-binding protein WtpC (wtpC) from Thermococcus kodakarensis (strain ATCC BAA-918 / JCM 12380 / KOD1) (Pyrococcus kodakaraensis (strain KOD1)).